The following is a 265-amino-acid chain: Hydroxyethylthiazole kinase (265 aa).

Met-50 is a binding site for substrate. Arg-125 and Thr-171 together coordinate ATP. A substrate-binding site is contributed by Gly-198.

It belongs to the Thz kinase family. It depends on Mg(2+) as a cofactor.

The enzyme catalyses 5-(2-hydroxyethyl)-4-methylthiazole + ATP = 4-methyl-5-(2-phosphooxyethyl)-thiazole + ADP + H(+). It functions in the pathway cofactor biosynthesis; thiamine diphosphate biosynthesis; 4-methyl-5-(2-phosphoethyl)-thiazole from 5-(2-hydroxyethyl)-4-methylthiazole: step 1/1. Its function is as follows. Catalyzes the phosphorylation of the hydroxyl group of 4-methyl-5-beta-hydroxyethylthiazole (THZ). The polypeptide is Hydroxyethylthiazole kinase (Salmonella typhimurium (strain LT2 / SGSC1412 / ATCC 700720)).